Reading from the N-terminus, the 236-residue chain is Glyoxalase 3 (236 aa).

Residues cysteine 136, histidine 137, and glutamate 168 contribute to the active site. At cysteine 136 the chain carries Cysteine sulfinic acid (-SO2H).

Belongs to the peptidase C56 family. HSP31-like subfamily. In terms of assembly, monomer.

It catalyses the reaction methylglyoxal + H2O = (R)-lactate + H(+). Functionally, catalyzes the conversion of methylglyoxal (MG) to D-lactate in a single glutathione (GSH)-independent step. Selective for MG, does not use glyoxal as substrate. Plays a role in detoxifying endogenously produced MG, particularly when glycerol is the principal carbon source. Important for viability in stationary phase. The chain is Glyoxalase 3 from Candida albicans (strain SC5314 / ATCC MYA-2876) (Yeast).